The chain runs to 138 residues: Probable lactoylglutathione lyase (138 aa).

Positions 5–129 (RILHTMLRVG…DGYMIELIQN (125 aa)) constitute a VOC domain. Ni(2+) is bound at residue histidine 8. A substrate-binding site is contributed by arginine 12. Glutamate 59 is a Ni(2+) binding site. Positions 63 and 77 each coordinate substrate. Residues histidine 77 and glutamate 125 each coordinate Ni(2+). The Proton donor/acceptor role is filled by glutamate 125.

It belongs to the glyoxalase I family. Ni(2+) serves as cofactor.

It catalyses the reaction (R)-S-lactoylglutathione = methylglyoxal + glutathione. The protein operates within secondary metabolite metabolism; methylglyoxal degradation; (R)-lactate from methylglyoxal: step 1/2. In terms of biological role, catalyzes the conversion of hemimercaptal, formed from methylglyoxal and glutathione, to S-lactoylglutathione. The chain is Probable lactoylglutathione lyase (gloA) from Vibrio cholerae serotype O1 (strain ATCC 39315 / El Tor Inaba N16961).